Consider the following 198-residue polypeptide: Glutamyl-tRNA(Gln) amidotransferase subunit C, mitochondrial (198 aa).

Belongs to the GatC family. Subunit of the heterotrimeric GatCAB amidotransferase (AdT) complex, composed of A, B and C subunits.

It is found in the mitochondrion. It carries out the reaction L-glutamyl-tRNA(Gln) + L-glutamine + ATP + H2O = L-glutaminyl-tRNA(Gln) + L-glutamate + ADP + phosphate + H(+). In terms of biological role, allows the formation of correctly charged Gln-tRNA(Gln) through the transamidation of misacylated Glu-tRNA(Gln) in the mitochondria. The reaction takes place in the presence of glutamine and ATP through an activated gamma-phospho-Glu-tRNA(Gln). The protein is Glutamyl-tRNA(Gln) amidotransferase subunit C, mitochondrial of Caenorhabditis remanei (Caenorhabditis vulgaris).